The chain runs to 397 residues: Sporulation-specific protein 20 (397 aa).

Residues 1–26 (MGFRKILASKSHHSRHHNQHHKNLKL) are disordered. The inhibitory region stretch occupies residues 4–50 (RKILASKSHHSRHHNQHHKNLKLQNHRYVLISNITGSHETKYLSPFR). Residues 10 to 26 (KSHHSRHHNQHHKNLKL) show a composition bias toward basic residues. The interval 51 to 95 (MDNCSGSRRRDRLHVKLKSLRNKIHKQLHPNCRFDDATKTSDDKC) is positive regulatory region. One can recognise a t-SNARE coiled-coil homology domain in the interval 330-392 (NQMEIDLYGN…QAKRYRLEKV (63 aa)).

It belongs to the SNAP-25 family. As to quaternary structure, interacts with the t-SNARE SSO1 and the v-SNARE SNC2.

It is found in the cell membrane. Its subcellular location is the prospore membrane. Functionally, required to maintain the prospore membrane to the nucleus during sporulation in order to capture the daughter nuclei and form the spores. Mediates the fusion of exocytic vesicles with the plasma membrane during sporulation through its interactions with the t-SNARE SSO1 and v-SNARE SNC2. This chain is Sporulation-specific protein 20 (SPO20), found in Saccharomyces cerevisiae (strain ATCC 204508 / S288c) (Baker's yeast).